A 314-amino-acid chain; its full sequence is Olfactory receptor 14A2 (314 aa).

The Extracellular segment spans residues 1–26 (MANVTLVTGFLLMGFSNIQKLRILYG). N-linked (GlcNAc...) asparagine glycosylation occurs at asparagine 3. Residues 27 to 47 (VLFLLIYLAALMSNLLIITLI) traverse the membrane as a helical segment. Residues 48–55 (TLDVKLQT) lie on the Cytoplasmic side of the membrane. Residues 56-76 (PMYFFLKNLSFLDVFLVSVPI) traverse the membrane as a helical segment. Over 77-91 (PKFIVNNLTHNNSIS) the chain is Extracellular. Residue asparagine 83 is glycosylated (N-linked (GlcNAc...) asparagine). A helical membrane pass occupies residues 92-112 (ILGCAFQLLLMTSFSAGEIFI). An intrachain disulfide couples cysteine 95 to cysteine 177. Residues 113-136 (LTAMSYDRYVAICCPLNYEVIMNT) are Cytoplasmic-facing. A helical membrane pass occupies residues 137-157 (GVCVLMASVSWAIGGLFGTAY). At 158–193 (TAGTFSMPFCGSSVIPQFFCDVPSLLRISCSETLMV) the chain is on the extracellular side. The chain crosses the membrane as a helical span at residues 194–214 (IYAGIGVGACLSISCFICIVI). Residues 215–237 (SYIYIFSTVLKIPTTKGQSKAFS) are Cytoplasmic-facing. The helical transmembrane segment at 238 to 258 (TCFPHLTVFTVFIITAYFVYL) threads the bilayer. Residues 259–267 (KPPSNSPSV) lie on the Extracellular side of the membrane. The helical transmembrane segment at 268 to 290 (IDRLLSVIYTVMPPVFNPVTYSL) threads the bilayer. Residues 291–314 (RNNDMKCALIRLLQKTYGQEAYFI) are Cytoplasmic-facing.

Belongs to the G-protein coupled receptor 1 family.

It is found in the cell membrane. Functionally, odorant receptor. This is Olfactory receptor 14A2 (OR14A2) from Homo sapiens (Human).